The following is a 276-amino-acid chain: Diaminopimelate epimerase (276 aa).

Residues Asn13, Gln46, and Asn66 each coordinate substrate. Cys75 functions as the Proton donor in the catalytic mechanism. Substrate contacts are provided by residues 76-77 (GN), Asn159, Asn192, and 210-211 (ER). Residue Cys219 is the Proton acceptor of the active site. 220-221 (GT) is a binding site for substrate.

It belongs to the diaminopimelate epimerase family. As to quaternary structure, homodimer.

It localises to the cytoplasm. It carries out the reaction (2S,6S)-2,6-diaminopimelate = meso-2,6-diaminopimelate. The protein operates within amino-acid biosynthesis; L-lysine biosynthesis via DAP pathway; DL-2,6-diaminopimelate from LL-2,6-diaminopimelate: step 1/1. Catalyzes the stereoinversion of LL-2,6-diaminopimelate (L,L-DAP) to meso-diaminopimelate (meso-DAP), a precursor of L-lysine and an essential component of the bacterial peptidoglycan. This is Diaminopimelate epimerase from Aeromonas hydrophila subsp. hydrophila (strain ATCC 7966 / DSM 30187 / BCRC 13018 / CCUG 14551 / JCM 1027 / KCTC 2358 / NCIMB 9240 / NCTC 8049).